Reading from the N-terminus, the 290-residue chain is Small ribosomal subunit biogenesis GTPase RsgA (290 aa).

In terms of domain architecture, CP-type G spans 61 to 218 (KSELVRPTVA…IVDTPGFSTL (158 aa)). Residues 110–113 (NKID) and 161–169 (GPSGAGKST) each bind GTP. Residues C243, C248, H250, and C256 each contribute to the Zn(2+) site.

Belongs to the TRAFAC class YlqF/YawG GTPase family. RsgA subfamily. As to quaternary structure, monomer. Associates with 30S ribosomal subunit, binds 16S rRNA. Zn(2+) serves as cofactor.

The protein localises to the cytoplasm. Its function is as follows. One of several proteins that assist in the late maturation steps of the functional core of the 30S ribosomal subunit. Helps release RbfA from mature subunits. May play a role in the assembly of ribosomal proteins into the subunit. Circularly permuted GTPase that catalyzes slow GTP hydrolysis, GTPase activity is stimulated by the 30S ribosomal subunit. This Clostridium beijerinckii (strain ATCC 51743 / NCIMB 8052) (Clostridium acetobutylicum) protein is Small ribosomal subunit biogenesis GTPase RsgA.